The following is a 949-amino-acid chain: SGGFDFSFLPQPPQEKAVGLGPGPMGLMGPRGPPGASGAPGPQGFQGPAGEPGEPGQTGPAGARGPAGPPGKAGGVVGPQGARGFPGTPGLPGFKGIRGHNGLDGLKGEPGAPGENGTPGQTGARGLPGERGRVGAPGPAGRGSDGSVGPVGPAGPIGSAGPPGFPGAPGPKGELGPVGNTGPAGPAGPRGEQGLPGVSGPVGPPGNPGANGLTGAKGAAGLPGVAGAPGLPGPRGIPGPVGASGATGARGLVGEPGPAGSKGESGGKGEPGSAGPQGPPGSSGEEGKRGPNGEGSTGPTGPPGLRGGPGSRGLPGADGRAGVIGLAGARGASGPAGVRGPSGDTGRPGEPGLMGARGLPGSPGNVGPAGKEGPVGLPGIDGRPGPIGPAGARGEAGNIGFPGPKGPAGDPGKGNRGAPGPDGNNGAQGPPGLQGVQGGKGEQGPAGPPGFQGLPGPAGTTGEAGKPGERGPGEFGLPGPAGPRGERGPPGESGAVGPSGAIGSRGPSGPPGPDGNKGEPGVVGAPGTAGPAGSGGLPGERGAAGIPGGKGEKGETGLRGEVGTTGRDGARGAPGAVGAPGPAGATGDRGEAGAAGPAGPAGPRGSPGERGEVGPAGPNGFAGPAGAAGQPGAKGERGTKGPKGENGIVGPTGPVGSAGPAGPNGPAGPAGSRGDGGPPGVTGFPGAAGRTGPPGPSGITGPPGPPGAAGKEGLRGPRGDQGPVGRGETGAGGPPGFTGEKGPSGEPGTAGPPGTAGPQGLLGAPGILGLPGSRGERGLPGVAGAVGEPGPLGISGPPGARGGKHGNRGEPGPVGSVGPVGALGPRGPSGPQGIRGDKGEPGEKGPRGLPGLKGHNGLQGLPGLAGQHGDQGSPGPVGPAGPRGPAGPSGPPGKDGRTGHPGAVGPAGIRGSQGSQGPSGPAGPPGPPGPPGASGGGYDFGYEGDFYRA.

Residues 1-949 (SGGFDFSFLP…FGYEGDFYRA (949 aa)) are disordered. 4-hydroxyproline is present on residues proline 10, proline 13, proline 34, and proline 40. Low complexity predominate over residues 27–66 (LMGPRGPPGASGAPGPQGFQGPAGEPGEPGQTGPAGARGP). Lysine 95 carries the post-translational modification 5-hydroxylysine; alternate. A glycan (O-linked (Gal...) hydroxylysine; alternate) is linked at lysine 95. 2 stretches are compositionally biased toward low complexity: residues 147–162 (SVGP…SAGP) and 208–229 (PGAN…AGAP). Residues 263–272 (GESGGKGEPG) are compositionally biased toward gly residues. Residues 273–283 (SAGPQGPPGSS) show a composition bias toward low complexity. Residues 292–313 (NGEGSTGPTGPPGLRGGPGSRG) show a composition bias toward gly residues. A 4-hydroxyproline mark is found at proline 348 and proline 351. Over residues 377-396 (LPGIDGRPGPIGPAGARGEA) the composition is skewed to low complexity. Residues 435-444 (GVQGGKGEQG) show a composition bias toward gly residues. 2 stretches are compositionally biased toward low complexity: residues 490-507 (PGES…SRGP) and 519-529 (EPGVVGAPGTA). Positions 530 to 539 (GPAGSGGLPG) are enriched in gly residues. Low complexity-rich tracts occupy residues 562–606 (VGTT…PRGS) and 613–633 (VGPA…QPGA). Residues 634 to 643 (KGERGTKGPK) are compositionally biased toward basic and acidic residues. Over residues 651–661 (PTGPVGSAGPA) the composition is skewed to low complexity. The span at 671-680 (GSRGDGGPPG) shows a compositional bias: gly residues. A compositionally biased stretch (low complexity) spans 682-691 (TGFPGAAGRT). A compositionally biased stretch (gly residues) spans 722–736 (GPVGRGETGAGGPPG). Low complexity-rich tracts occupy residues 737-771 (FTGE…LGLP), 779-792 (LPGV…PGPL), and 810-825 (EPGP…ALGP). Over residues 835-846 (RGDKGEPGEKGP) the composition is skewed to basic and acidic residues. Pro residues predominate over residues 921-931 (PAGPPGPPGPP).

The protein belongs to the fibrillar collagen family. Trimers of one alpha 2(I) and two alpha 1(I) chains. Interacts (via C-terminus) with TMEM131 (via PapD-L domain); the interaction is direct and is involved in assembly and TRAPPIII ER-to-Golgi transport complex-dependent secretion of collagen. Prolines at the third position of the tripeptide repeating unit (G-X-Y) are hydroxylated in some or all of the chains. In terms of tissue distribution, expressed in bones.

It localises to the secreted. The protein resides in the extracellular space. It is found in the extracellular matrix. Type I collagen is a member of group I collagen (fibrillar forming collagen). In Acratocnus ye (Hispaniolan ground sloth), this protein is Collagen alpha-2(I) chain.